The following is a 759-amino-acid chain: Protein transport protein sec23-1 (759 aa).

C56, C60, C79, and C82 together coordinate Zn(2+).

This sequence belongs to the SEC23/SEC24 family. SEC23 subfamily. In terms of assembly, the COPII coat is composed of at least 5 proteins: the sec23/24 complex, the sec13/31 complex, and the protein sar1.

The protein localises to the cytoplasm. It is found in the cytoplasmic vesicle. It localises to the COPII-coated vesicle membrane. Its subcellular location is the endoplasmic reticulum membrane. The protein resides in the golgi apparatus membrane. Functionally, component of the coat protein complex II (COPII) which promotes the formation of transport vesicles from the endoplasmic reticulum (ER). The coat has two main functions, the physical deformation of the endoplasmic reticulum membrane into vesicles and the selection of cargo molecules. This chain is Protein transport protein sec23-1 (sec231), found in Schizosaccharomyces pombe (strain 972 / ATCC 24843) (Fission yeast).